The chain runs to 991 residues: Integrator complex subunit 10-like protein (991 aa).

Disordered stretches follow at residues 180–217 (NNNN…NNNN), 310–345 (YFDE…DIEK), 462–484 (NDYF…SQES), 549–614 (NSSS…GQQP), and 961–991 (EKQY…EMNE). A compositionally biased stretch (low complexity) spans 319–333 (KQQQQQQQQQQQQEQ). Residues 473–484 (GGDENDENSQES) are compositionally biased toward acidic residues. Residues 549–609 (NSSSGSNGII…NNNNNNNNNN (61 aa)) are compositionally biased toward low complexity. A compositionally biased stretch (polar residues) spans 964–991 (YSSSNTANNSGVNNSPIHNQNTDVEMNE).

The protein resides in the nucleus. In terms of biological role, may be a component of the Integrator complex, a complex involved in the small nuclear RNAs (snRNA) U1 and U2 transcription and in their 3'-box-dependent processing. The polypeptide is Integrator complex subunit 10-like protein (Dictyostelium discoideum (Social amoeba)).